The chain runs to 102 residues: Probable non-specific lipid-transfer protein (102 aa).

An N-terminal signal peptide occupies residues 1–35 (MAMAMGMAMRKEAAVAVMMVMVVTLAAGADAGAGA). Cystine bridges form between Cys-37/Cys-71, Cys-45/Cys-59, Cys-60/Cys-95, and Cys-69/Cys-102.

Belongs to the plant LTP family. B11E subfamily. As to expression, aleurone.

In terms of biological role, potential phospholipid transfer protein. In Hordeum vulgare (Barley), this protein is Probable non-specific lipid-transfer protein (LTP2).